Here is a 221-residue protein sequence, read N- to C-terminus: F-box protein At1g55000 (221 aa).

Residues 7–46 (DTLIIIFQKLTVADLARASCVCKVWNSVATEDDLVVSAFT) enclose the F-box domain. A LysM domain is found at 74-118 (ISHRICRGDSVTSLAVKYAVQVMDIKRLNNMMSDHGIYSRDRLLI).

Part of a SCF (ASK-cullin-F-box) protein ligase complex. Interacts with SKP1A/ASK1, SKP1B/ASK2, ASK4, ASK11 and ASK13.

It participates in protein modification; protein ubiquitination. Its function is as follows. Component of SCF(ASK-cullin-F-box) E3 ubiquitin ligase complexes, which may mediate the ubiquitination and subsequent proteasomal degradation of target proteins. In Arabidopsis thaliana (Mouse-ear cress), this protein is F-box protein At1g55000.